The chain runs to 366 residues: UDP-N-acetylglucosamine--N-acetylmuramyl-(pentapeptide) pyrophosphoryl-undecaprenol N-acetylglucosamine transferase (366 aa).

Residues Thr17–Gly19, Asn129, Arg169, Ser195, Ile251, Ala270–Glu275, and Gln296 each bind UDP-N-acetyl-alpha-D-glucosamine.

This sequence belongs to the glycosyltransferase 28 family. MurG subfamily.

The protein resides in the cell inner membrane. It carries out the reaction di-trans,octa-cis-undecaprenyl diphospho-N-acetyl-alpha-D-muramoyl-L-alanyl-D-glutamyl-meso-2,6-diaminopimeloyl-D-alanyl-D-alanine + UDP-N-acetyl-alpha-D-glucosamine = di-trans,octa-cis-undecaprenyl diphospho-[N-acetyl-alpha-D-glucosaminyl-(1-&gt;4)]-N-acetyl-alpha-D-muramoyl-L-alanyl-D-glutamyl-meso-2,6-diaminopimeloyl-D-alanyl-D-alanine + UDP + H(+). It participates in cell wall biogenesis; peptidoglycan biosynthesis. In terms of biological role, cell wall formation. Catalyzes the transfer of a GlcNAc subunit on undecaprenyl-pyrophosphoryl-MurNAc-pentapeptide (lipid intermediate I) to form undecaprenyl-pyrophosphoryl-MurNAc-(pentapeptide)GlcNAc (lipid intermediate II). This is UDP-N-acetylglucosamine--N-acetylmuramyl-(pentapeptide) pyrophosphoryl-undecaprenol N-acetylglucosamine transferase from Shewanella denitrificans (strain OS217 / ATCC BAA-1090 / DSM 15013).